Consider the following 257-residue polypeptide: Hydroxyacylglutathione hydrolase (257 aa).

Residues His-54, His-56, Asp-58, His-59, His-113, Asp-137, and His-175 each contribute to the Zn(2+) site.

This sequence belongs to the metallo-beta-lactamase superfamily. Glyoxalase II family. As to quaternary structure, monomer. Zn(2+) is required as a cofactor.

It carries out the reaction an S-(2-hydroxyacyl)glutathione + H2O = a 2-hydroxy carboxylate + glutathione + H(+). It functions in the pathway secondary metabolite metabolism; methylglyoxal degradation; (R)-lactate from methylglyoxal: step 2/2. Its function is as follows. Thiolesterase that catalyzes the hydrolysis of S-D-lactoyl-glutathione to form glutathione and D-lactic acid. The protein is Hydroxyacylglutathione hydrolase of Trichormus variabilis (strain ATCC 29413 / PCC 7937) (Anabaena variabilis).